Reading from the N-terminus, the 351-residue chain is Nicotinate-nucleotide--dimethylbenzimidazole phosphoribosyltransferase (351 aa).

Residue glutamate 318 is the Proton acceptor of the active site.

This sequence belongs to the CobT family.

It catalyses the reaction 5,6-dimethylbenzimidazole + nicotinate beta-D-ribonucleotide = alpha-ribazole 5'-phosphate + nicotinate + H(+). Its pathway is nucleoside biosynthesis; alpha-ribazole biosynthesis; alpha-ribazole from 5,6-dimethylbenzimidazole: step 1/2. Its function is as follows. Catalyzes the synthesis of alpha-ribazole-5'-phosphate from nicotinate mononucleotide (NAMN) and 5,6-dimethylbenzimidazole (DMB). The sequence is that of Nicotinate-nucleotide--dimethylbenzimidazole phosphoribosyltransferase from Shewanella frigidimarina (strain NCIMB 400).